A 695-amino-acid chain; its full sequence is Probable rhamnogalacturonate lyase C (695 aa).

Positions 1 to 21 (MFLPSRKALAFLACLASHSVA) are cleaved as a signal peptide. N-linked (GlcNAc...) asparagine glycosylation is found at Asn-28, Asn-96, Asn-118, Asn-144, Asn-199, Asn-285, Asn-532, and Asn-638.

The protein belongs to the polysaccharide lyase 4 family.

The protein resides in the secreted. The enzyme catalyses Endotype eliminative cleavage of L-alpha-rhamnopyranosyl-(1-&gt;4)-alpha-D-galactopyranosyluronic acid bonds of rhamnogalacturonan I domains in ramified hairy regions of pectin leaving L-rhamnopyranose at the reducing end and 4-deoxy-4,5-unsaturated D-galactopyranosyluronic acid at the non-reducing end.. Pectinolytic enzymes consist of four classes of enzymes: pectin lyase, polygalacturonase, pectin methylesterase and rhamnogalacturonase. Degrades the rhamnogalacturonan I (RG-I) backbone of pectin. This chain is Probable rhamnogalacturonate lyase C (rglC), found in Aspergillus oryzae (strain ATCC 42149 / RIB 40) (Yellow koji mold).